A 276-amino-acid chain; its full sequence is MLMITSFANPRVAQAFVDYMATQGVILTIQQHNQSDIWLADESQAERVRVELARFIENPGDPRYLAASWQSGQTNSGLRYRRFPFLATLRERAGPVTWIVMLACVVVYIAMSLIGDQTVMVWLAWPFDPVLKFEVWRYFTHIFMHFSLMHILFNLLWWWYLGGAVEKRLGSGKLIVITVISALLSGYVQQKFSGPWFGGLSGVVYALMGYVWLRGERDPQSGIYLQRGLIIFALLWIVASWFDWFGMSMANGAHIAGLIVGLAMAFVDTLNARKRT.

6 consecutive transmembrane segments (helical) span residues Gly94 to Ile114, Ile142 to Gly162, Leu169 to Gln189, Phe192 to Trp212, Leu229 to Met249, and Ala250 to Leu270. The Nucleophile role is filled by Ser201. Residue His254 is part of the active site.

It belongs to the peptidase S54 family.

It localises to the cell inner membrane. It catalyses the reaction Cleaves type-1 transmembrane domains using a catalytic dyad composed of serine and histidine that are contributed by different transmembrane domains.. Functionally, rhomboid-type serine protease that catalyzes intramembrane proteolysis. The protein is Rhomboid protease GlpG of Salmonella paratyphi A (strain ATCC 9150 / SARB42).